Here is a 351-residue protein sequence, read N- to C-terminus: Transmembrane protein 115 (351 aa).

At 1–19 (MQRALPGARQHLGAILASA) the chain is on the cytoplasmic side. The tract at residues 1–205 (MQRALPGARQ…FGLLSSWVYL (205 aa)) is mediates homooligomerization. Residues 20–40 (SVVVKALCAAVLFLYLLSFAV) form a helical membrane-spanning segment. Residues 41 to 97 (DTGCLAVTPGYLFPPNFWIWTLATHGLMEQHVWDVAISLTTVVVAGRLLEPLWGALE) lie on the Lumenal side of the membrane. A helical transmembrane segment spans residues 98 to 118 (LLIFFSVVNVSVGLLGAFAYL). Residues 119 to 126 (LTYMASFN) lie on the Cytoplasmic side of the membrane. Residues 127 to 147 (LVYLFTVRIHGALGFLGGVLV) form a helical membrane-spanning segment. The Lumenal segment spans residues 148 to 165 (ALKQTMGDCVVLRVPQVR). A helical transmembrane segment spans residues 166-186 (VSVMPMLLLALLLLLRLATLL). Over 187–351 (QSPALASYGF…ITFEAAPPTL (165 aa)) the chain is Cytoplasmic. Residues 206 to 229 (RFYQRHSRGRGDMADHFAFATFFP) form a mediates localization to the Golgi region. The segment at 301–351 (QSIWPSMDDDEEESGAKVDSPLPSDKAPTPPGKGAAPESSLITFEAAPPTL) is disordered. Threonine 329 carries the post-translational modification Phosphothreonine.

It belongs to the TMEM115 family. As to quaternary structure, homooligomer. Interacts with COPB1. May interact with LMAN1. Interacts with the COG complex; probably through COG3. Expressed strongly in kidney and skeletal muscle, followed by liver, placenta, pancreas, and lung, with low amounts in heart and only traces in brain. Widely expressed with ubiquitous expression in epithelial tissues (at protein level).

The protein resides in the golgi apparatus. Its subcellular location is the golgi stack membrane. Its function is as follows. May play a role in retrograde transport of proteins from the Golgi to the endoplasmic reticulum. May indirectly play a role in protein glycosylation in the Golgi. The chain is Transmembrane protein 115 from Homo sapiens (Human).